Consider the following 147-residue polypeptide: Large ribosomal subunit protein bL9 (147 aa).

It belongs to the bacterial ribosomal protein bL9 family.

Binds to the 23S rRNA. The protein is Large ribosomal subunit protein bL9 of Geotalea daltonii (strain DSM 22248 / JCM 15807 / FRC-32) (Geobacter daltonii).